The sequence spans 1330 residues: pre-mRNA 3' end processing protein WDR33 (1330 aa).

A2 carries the N-acetylalanine modification. S7 carries the post-translational modification Phosphoserine. K46 bears the N6-acetyllysine mark. WD repeat units lie at residues 117-156, 159-198, 200-239, 242-283, 286-325, 329-369, and 373-412; these read KVKCPVFVVRWTPEGRRLVTGASSGEFTLWNGLTFNFETI, AHDSPVRAMTWSHNDMWMLTADHGGYVKYWQSNMNNVKMF, AHKEAIREASFSPTDNKFATCSDDGTVRIWDFLRCHEERI, GHGA…SLAT, AHKNTVMEVKLNLNGNWLLTASRDHLCKLFDIRNLKEELQ, GHKK…EVGG, and AHEGMIWSLAWHPLGHILCSGSNDHTSKFWTRNRPGDKMR. Residues K526, K530, and K560 each participate in a glycyl lysine isopeptide (Lys-Gly) (interchain with G-Cter in SUMO2) cross-link. A disordered region spans residues 566-1330; the sequence is QKQADQIQPP…GTSRGSGRGR (765 aa). A compositionally biased stretch (polar residues) spans 588-607; the sequence is FSGQGPISQIPQGFQQPHPS. The Collagen-like domain occupies 617 to 769; sequence GPPGPQGQFR…GPASQGIQGP (153 aa). Low complexity predominate over residues 622–642; sequence QGQFRAPGPQGQMGPQGPPMH. The span at 682 to 694 shows a compositional bias: pro residues; it reads PHGPLGPQGPPGP. Composition is skewed to low complexity over residues 695–706 and 725–750; these read QGSSGPQGHMGP and QGHMGPQGPPGTQGMQGPPGPRGMQG. R776 carries the post-translational modification Omega-N-methylarginine. The span at 848–863 shows a compositional bias: low complexity; sequence GPSGSQGQQGPPQGSL. R909 carries the post-translational modification Asymmetric dimethylarginine. Positions 926-935 are enriched in low complexity; that stretch reads PGLGQQGAQG. 2 stretches are compositionally biased toward basic and acidic residues: residues 965–983 and 992–1027; these read SERRHEQSGGPEHGPDRGP and GPPDRRGSHPDFPDDFRPDDFHPDKRFGHRLREFEG. Omega-N-methylarginine is present on R981. An Omega-N-methylarginine modification is found at R1028. 2 stretches are compositionally biased toward basic and acidic residues: residues 1049–1061 and 1071–1115; these read PDHREFNEGDGRG and EGRR…RGRD. Over residues 1123–1133 the composition is skewed to acidic residues; the sequence is FGPEEGFDASD. Composition is skewed to basic and acidic residues over residues 1134 to 1143, 1163 to 1211, and 1236 to 1253; these read EAARGRDLRG, EFPR…RERS, and SEHREMEAQGGPSEDRGS. S1204 carries the phosphoserine modification. R1256 is subject to Omega-N-methylarginine. Residues 1275-1287 show a composition bias toward basic and acidic residues; that stretch reads DGDHHDGYHRDEP. The segment covering 1293–1323 has biased composition (low complexity); sequence GSSSSSRGARSGSNWGRGSNMNSGPPRRGTS. R1309 bears the Asymmetric dimethylarginine; alternate mark. R1309 is subject to Omega-N-methylarginine; alternate.

Belongs to the WD repeat WDR33 family. In terms of assembly, component of the cleavage and polyadenylation specificity factor (CPSF) module of the pre-mRNA 3'-end processing complex. Interacts with CPSF3/CPSF73. In terms of tissue distribution, most highly expressed in testis.

It is found in the nucleus. Essential for both cleavage and polyadenylation of pre-mRNA 3' ends. This Mus musculus (Mouse) protein is pre-mRNA 3' end processing protein WDR33 (Wdr33).